Reading from the N-terminus, the 171-residue chain is MDYFTLFGLPARYQLDTQALSLRFQDLQRQYHPDKFASGSLAEQLAAVQQSATINQAWQTLRHPLMRAEYLLSLHGFDLASEQHTVRDTAFLMEQLELREELDEIEQAKDEARLESFIKRVKKMFDTRHQLMVEQLDNEAWDAAADTVRKLRFLDKLRSSAEQLEEKLLDF.

Residues 2–74 (DYFTLFGLPA…LMRAEYLLSL (73 aa)) enclose the J domain.

It belongs to the HscB family. In terms of assembly, interacts with HscA and stimulates its ATPase activity. Interacts with IscU.

Its function is as follows. Co-chaperone involved in the maturation of iron-sulfur cluster-containing proteins. Seems to help targeting proteins to be folded toward HscA. This is Co-chaperone protein HscB from Shigella flexneri serotype 5b (strain 8401).